Consider the following 877-residue polypeptide: DNA polymerase I (877 aa).

One can recognise a 5'-3' exonuclease domain in the interval 177–270 (TPAQFIDLKA…LEDLVYSGPD (94 aa)). A 3'-5' exonuclease domain is found at 302 to 465 (DFTIVDQISQ…TEPILLEKLS (164 aa)).

Belongs to the DNA polymerase type-A family. As to quaternary structure, single-chain monomer with multiple functions.

It carries out the reaction DNA(n) + a 2'-deoxyribonucleoside 5'-triphosphate = DNA(n+1) + diphosphate. In terms of biological role, in addition to polymerase activity, this DNA polymerase exhibits 3'-5' and 5'-3' exonuclease activity. This is DNA polymerase I (polA) from Streptococcus pneumoniae serotype 4 (strain ATCC BAA-334 / TIGR4).